We begin with the raw amino-acid sequence, 248 residues long: 14-3-3 protein sigma (248 aa).

Phosphoserine is present on residues S5, S74, and S248.

It belongs to the 14-3-3 family. In terms of assembly, homodimer. Interacts with KRT17 and SAMSN1. Found in a complex with XPO7, EIF4A1, ARHGAP1, VPS26A, VPS29 and VPS35. Interacts with GAB2. Interacts with SRPK2. Interacts with COPS6. Interacts with COP1; this interaction leads to proteasomal degradation. Interacts with the 'Thr-369' phosphorylated form of DAPK2. Interacts with PI4KB. Interacts with SLITRK1. Interacts with LRRK2; this interaction is dependent on LRRK2 phosphorylation. Interacts with PKP3 (via N-terminus); the interaction maintains the cytoplasmic pool of PKP3, facilitates PKP3 exchange at desmosomes and restricts PKP3 localization to existing desmosome cell junctions. Interacts with LCP2. Post-translationally, ubiquitinated. Ubiquitination by RFFL induces proteasomal degradation and indirectly regulates p53/TP53 activation. Expressed in dorsal skin (at protein level). Expressed in the basal layer of skin epithelium and in outer root sheath of hair follicle.

Its subcellular location is the cytoplasm. It localises to the nucleus. The protein resides in the secreted. Its function is as follows. Adapter protein implicated in the regulation of a large spectrum of both general and specialized signaling pathways. Binds to a large number of partners, usually by recognition of a phosphoserine or phosphothreonine motif. Binding generally results in the modulation of the activity of the binding partner. Promotes cytosolic retention of GBP1 GTPase by binding to phosphorylated GBP1, thereby inhibiting the innate immune response. Also acts as a TP53/p53-regulated inhibitor of G2/M progression. When bound to KRT17, regulates protein synthesis and epithelial cell growth by stimulating Akt/mTOR pathway. Acts to maintain desmosome cell junction adhesion in epithelial cells via interacting with and sequestering PKP3 to the cytoplasm, thereby restricting its translocation to existing desmosome structures and therefore maintaining desmosome protein homeostasis. Also acts to facilitate PKP3 exchange at desmosome plaques, thereby maintaining keratinocyte intercellular adhesion. May also regulate MDM2 autoubiquitination and degradation and thereby activate p53/TP53. In Mus musculus (Mouse), this protein is 14-3-3 protein sigma (Sfn).